The primary structure comprises 505 residues: Neuronal acetylcholine receptor subunit alpha-3 (505 aa).

A signal peptide spans 1 to 31; it reads MGSGPLSLPLALSPPRLLLLLLLSLLPVARA. Residues 32 to 250 are Extracellular-facing; that stretch reads SEAEHRLFER…PLFYTINLII (219 aa). 2 N-linked (GlcNAc...) asparagine glycosylation sites follow: asparagine 55 and asparagine 172. 2 disulfide bridges follow: cysteine 159-cysteine 173 and cysteine 223-cysteine 224. The helical transmembrane segment at 251-266 threads the bilayer; sequence PCLLISFLTVLVFYLP. Residues 267 to 268 are Cytoplasmic-facing; sequence SD. A helical transmembrane segment spans residues 269–285; the sequence is CGEKVTLCISVLLSLTV. The Extracellular portion of the chain corresponds to 286-307; it reads FLLVITETIPSTSLVIPLIGEY. The helical transmembrane segment at 308 to 326 threads the bilayer; that stretch reads LLFTMIFVTLSIVITVFVL. Topologically, residues 327-474 are cytoplasmic; the sequence is NVHYRTPTTH…QDDWKYVAMV (148 aa). Serine 413 and serine 416 each carry phosphoserine. The chain crosses the membrane as a helical span at residues 475–493; the sequence is IDRIFLWVFTLVCILGTAG. Over 494 to 505 the chain is Extracellular; that stretch reads LFLQPLMAREDA.

It belongs to the ligand-gated ion channel (TC 1.A.9) family. Acetylcholine receptor (TC 1.A.9.1) subfamily. Alpha-3/CHRNA3 sub-subfamily. In terms of assembly, neuronal AChR is composed of two different types of subunits: alpha and beta. CHRNA3/Alpha-3 subunit can be combined to CHRNA5/alpha-5, CHRNB2/beta-2 CHRNB3/beta-3 or CHRNB4/beta-4 to give rise to functional receptors. Forms stoichiometries such as (CHRNA3)2:(CHRNB4)3 or (CHRNA3:CHRNB4)2:CHRNB3. Part of a complex composed of STUB1/CHIP, VCP/p97, CHRNA3, and UBXN2A that modulates the ubiquitination and endoplasmic reticulum-associated degradation (ERAD) of CHRNA3. Within the complex UBXN2A acts as a scaffold protein required for the interaction of CHRNA3 with VCP/p97, this interaction also inhibits CHRNA3 ubiquitination by STUB1/CHIP and subsequently ERAD. Interacts with UBXN2A (via SEP domain), the interaction is required for the interaction of CHRNA3 in the STUB1:VCP:UBXN2A complex. Interacts with RIC3; which is required for proper folding and assembly. Interacts with LYPD6. Ubiquitinated; by STUB1/CHIP and thereafter degraded by the 26S proteosome complex.

It is found in the synaptic cell membrane. The protein localises to the cell membrane. It localises to the endoplasmic reticulum. Its subcellular location is the golgi apparatus. The enzyme catalyses Ca(2+)(in) = Ca(2+)(out). It catalyses the reaction K(+)(in) = K(+)(out). It carries out the reaction Na(+)(in) = Na(+)(out). With respect to regulation, activated by a myriad of ligands such as acetylcholine, cytisine, nicotine, choline and epibatidine. The heteropentamer CHRNA3:CHRNB2 activity is blocked by alpha-conotoxins ImI, ImII, PnIA, GID and MII. The heteropentamer CHRNA3:CHRNB4 activity is blocked by the alpha-conotoxin ImI and AuIB. Its function is as follows. Component of neuronal acetylcholine receptors (nAChRs) that function as pentameric, ligand-gated cation channels with high calcium permeability among other activities. nAChRs are excitatory neurotrasnmitter receptors formed by a collection of nAChR subunits known to mediate synaptic transmission in the nervous system and the neuromuscular junction. Each nAchR subunit confers differential attributes to channel properties, including activation, deactivation and desensitization kinetics, pH sensitivity, cation permeability, and binding to allosteric modulators. CHRNA3 forms heteropentameric neuronal acetylcholine receptors with CHRNB2 and CHRNB4, with CHRNA5, and CHRNB3 as accesory subunits. CHRNA3:CHRNB4 being predominant in neurons of the autonomic ganglia, it is known as ganglionic nicotinic receptor. CHRNA3:CHRNB4 or CHRNA3:CHRNA5:CHRNB4 play also an important role in the habenulo-interpeduncular tract, modulating the mesolimbic dopamine system and affecting reward circuits and addiction. Hypothalamic CHRNA3:CHRNB4 nAChR activation by nicotine leads to activation of POMC neurons and a decrease in food intake. Also expressed in the urothelium where it modulates reflex bladder activity by increasing intracellular calcium through extracellular influx and basal ATP release. The sequence is that of Neuronal acetylcholine receptor subunit alpha-3 from Homo sapiens (Human).